Reading from the N-terminus, the 622-residue chain is MPRITKLPESVANKISAGEVVQRPASVVKELIENAIDAGAGRIVLSIKDAGKQLVQIIDNGHGMSEPDALMCVERFATSKISSAEELETLGTLGFRGEALASISSVSHFELKSCSEGMDAAFLHRYEGGELVEKSKAAADRGTTISVRNLFFNVPARRKFLKTNATEFKHIFETVKAQALAYPEIQWQLFNDDEELFHFRSSDMHERLNFFFGEEFADSLIEIREENDFLSLYGYVGKPGMLKRQKNDQLFYINRRVIQNRMLSQALQQAYGELLVERQTPFALLFLGLDTRQVDINVHPAKLEVKFEDERNIRNMVYPIVKRAVQLQDFAPDVGIAGLLERQMTQDAMNPENSLRKLEYKRAAGPSSTTDDLYRSYLSELPPVSSPPPGSIGEQGEMFSDLLAPSRDRELKPSVYDRSALLQSDENRPDPAGSDSKIWQLHNKYIVCQIKTGLMVIDQHVAHERVLYERAVEIMNNNVPNSQQLLFPQKIELKSWEYEIFQEIRDDLCRLGFNLRSFGNRTVMIEGIAQDVRNGTEAVILQNMIDEYQQNALKLKLEKRENLAKSYSCRNAIMSGQKLSLEEMRSLIDRLFATRMPYVCPHGRPVIIKISLDQLDRMFGRK.

The protein belongs to the DNA mismatch repair MutL/HexB family.

This protein is involved in the repair of mismatches in DNA. It is required for dam-dependent methyl-directed DNA mismatch repair. May act as a 'molecular matchmaker', a protein that promotes the formation of a stable complex between two or more DNA-binding proteins in an ATP-dependent manner without itself being part of a final effector complex. The polypeptide is DNA mismatch repair protein MutL (Prosthecochloris aestuarii (strain DSM 271 / SK 413)).